Consider the following 912-residue polypeptide: Putative respiratory burst oxidase homolog protein J (912 aa).

2 disordered regions span residues 1–51 and 73–112; these read MKNN…GGGI and WRKS…RTTS. The Cytoplasmic portion of the chain corresponds to 1-323; that stretch reads MKNNKKVGTE…VVVTAELMYE (323 aa). 2 stretches are compositionally biased toward polar residues: residues 29–44 and 78–87; these read SVKQ…NPES and NLGSPSTRKS. EF-hand-like regions lie at residues 147–155 and 181–193; these read AVDGRLPKD and RQIK…DKEQ. The EF-hand domain occupies 205 to 240; that stretch reads DLDCRLQIFFDMCDKDGDGKLTEEEVKEVIVLSASA. Positions 218, 220, 222, 224, and 229 each coordinate Ca(2+). At serine 294 the chain carries Phosphoserine. A helical membrane pass occupies residues 324 to 344; sequence HWKKIWVVTLWLAVNVVLFMW. The Extracellular portion of the chain corresponds to 345 to 363; the sequence is KYEEFTTSPLYNITGRCLC. A helical transmembrane segment spans residues 364 to 384; sequence AAKGTAEILKLNMALILVPVL. Residues 366 to 523 form the Ferric oxidoreductase domain; it reads KGTAEILKLN…LLVIAYALLI (158 aa). Topologically, residues 385–410 are cytoplasmic; that stretch reads RRTLTFLRSTFLNHLIPFDDNINFHK. The helical transmembrane segment at 411–431 threads the bilayer; that stretch reads LIAVAIAVISLLHTALHMLCN. Residues 432-458 lie on the Extracellular side of the membrane; it reads YPRLSSCPYNFYSDYAGNLLGAKQPTY. Residues 459 to 479 traverse the membrane as a helical segment; the sequence is LGLMLTPVSVTGVLMIIFMGI. The Cytoplasmic portion of the chain corresponds to 480 to 510; the sequence is SFTLAMHYFRRNIVKLPIPFNRLAGFNSFWY. Residues 511-531 traverse the membrane as a helical segment; that stretch reads AHHLLVIAYALLIIHGYILII. The Extracellular portion of the chain corresponds to 532 to 697; it reads EKPWYQKTTW…PYGAPAQSYQ (166 aa). The 134-residue stretch at 562–695 folds into the FAD-binding FR-type domain; that stretch reads EHNHRVHIIK…KGPYGAPAQS (134 aa). The helical transmembrane segment at 698–718 threads the bilayer; the sequence is KFDILLLIGLGIGATPFISIL. The Cytoplasmic segment spans residues 719–912; that stretch reads KDMLNNLKPG…TRFTFHKENF (194 aa).

The protein belongs to the RBOH (TC 5.B.1.3) family. As to quaternary structure, monomer and homodimer.

The protein resides in the membrane. In terms of biological role, calcium-dependent NADPH oxidase that generates superoxide. This chain is Putative respiratory burst oxidase homolog protein J (RBOHJ), found in Arabidopsis thaliana (Mouse-ear cress).